The chain runs to 706 residues: Protein argonaute (706 aa).

The segment at M1–T108 is N-terminal domain. Residues K109–P165 form a linker L1 region. Residues T168 to L259 form the PAZ domain. Residues N263–T334 form a linker L2 region. The tract at residues N335–K448 is mid domain. One can recognise a Piwi domain in the interval L419–E694. The tract at residues K449–L706 is PIWI domain. Active-site residues include D502, E541, and D571. D502 is a Mn(2+) binding site. D571 lines the Mn(2+) pocket. The tract at residues F612 to L650 is PIWI box. D683 is an active-site residue. Residue D683 participates in Mn(2+) binding.

The protein belongs to the argonaute family. Long pAgo subfamily. Requires Mg(2+) as cofactor.

A DNA-guided RNA endonuclease. Uses short ssDNA sequences as guides (gDNA) to bind complementary target strands, resulting in cleavage of the target RNA. The cleavage site is 10 nucleotides downstream of the residue base paired with the 5'-end of the gDNA. Binds ssDNA better than ssRNA, binds dsDNA and DNA-RNA hybrids but does not bind dsRNA. A 2 nucleotide 3'-overhang (possibly on the guide strand) may help load nucleic acids into the complex. The polypeptide is Protein argonaute (Aquifex aeolicus (strain VF5)).